The following is a 147-amino-acid chain: Lysozyme C (147 aa).

Positions 1 to 18 (MKFFLILGFCLLPLIAQG) are cleaved as a signal peptide. Positions 19-147 (KVFQRCELAA…VSQWIRGCRV (129 aa)) constitute a C-type lysozyme domain. 4 disulfide bridges follow: Cys24/Cys145, Cys48/Cys133, Cys82/Cys98, and Cys94/Cys112. Active-site residues include Glu53 and Asp70. Residue Asp119 participates in substrate binding.

This sequence belongs to the glycosyl hydrolase 22 family. As to quaternary structure, monomer. As to expression, expressed in liver and ovary. Not expressed in bone marrow, lung, spleen, intestine or oviduct.

Its subcellular location is the secreted. The catalysed reaction is Hydrolysis of (1-&gt;4)-beta-linkages between N-acetylmuramic acid and N-acetyl-D-glucosamine residues in a peptidoglycan and between N-acetyl-D-glucosamine residues in chitodextrins.. Functionally, lysozymes have primarily a bacteriolytic function; those in tissues and body fluids are associated with the monocyte-macrophage system and enhance the activity of immunoagents. Has bacteriolytic activity against M.luteus. The sequence is that of Lysozyme C from Dromaius novaehollandiae (Emu).